A 375-amino-acid polypeptide reads, in one-letter code: Growth/differentiation factor 8 (375 aa).

The N-terminal stretch at 1–18 (MQKLQIFVYIYLFMLLVA) is a signal peptide. The propeptide occupies 19-266 (GPVDLNENSE…VTDTPKRSRR (248 aa)). 2 N-linked (GlcNAc...) asparagine glycosylation sites follow: Asn-48 and Asn-71. Disulfide bonds link Cys-272–Cys-282, Cys-281–Cys-340, Cys-309–Cys-372, and Cys-313–Cys-374.

It belongs to the TGF-beta family. In terms of assembly, homodimer; disulfide-linked. Interacts with WFIKKN2, leading to inhibit its activity. Interacts with FSTL3. Post-translationally, synthesized as large precursor molecule that undergoes proteolytic cleavage to generate an N-terminal propeptide and a disulfide linked C-terminal dimer, which is the biologically active molecule. The circulating form consists of a latent complex of the C-terminal dimer and other proteins, including its propeptide, which maintain the C-terminal dimer in a latent, inactive state. Ligand activation requires additional cleavage of the prodomain by a tolloid-like metalloproteinase.

The protein localises to the secreted. Acts specifically as a negative regulator of skeletal muscle growth. The polypeptide is Growth/differentiation factor 8 (MSTN) (Capra ibex (Ibex)).